Reading from the N-terminus, the 142-residue chain is Hemoglobin subunit alpha-1 (142 aa).

N-acetylserine is present on Ser-1. Residues 1-142 enclose the Globin domain; sequence SLSDKDKAAV…VALALAERYR (142 aa). His-59 serves as a coordination point for O2. His-88 lines the heme b pocket.

Belongs to the globin family. Hb1 is a heterotetramer of two alpha-2 chains and two beta chains, while Hb2 is a heterotetramer of two alpha-2 chains and two beta chains. As to expression, red blood cells.

Involved in oxygen transport from gills to the various peripheral tissues. The polypeptide is Hemoglobin subunit alpha-1 (hba1) (Notothenia angustata (Rockcod)).